The sequence spans 236 residues: MAENQSTVENAKEKLDRWLKDGITTPGGKLPSERELGELLGIKRMTLRQALLNLEAESKIFRKDRKGWFVTQPRFNYSPELSASFQRAAIEQGREPSWGFTEKNRTSDIPETLAPLIAVTPSTELYRITGWGALEGHKVFYHETYINPEVAPGFIEQLENHSFSAVWEKCYQKETVVKKLIFKPVRMPGDISKYLGGSAGMPAILIEKHRADQQGNIVQIDIEYWRFEAVDLIINL.

Residues 5–73 form the HTH gntR-type domain; it reads QSTVENAKEK…DRKGWFVTQP (69 aa). A DNA-binding region (H-T-H motif) is located at residues 33 to 52; sequence ERELGELLGIKRMTLRQALL.

This is an uncharacterized protein from Escherichia coli O157:H7.